Consider the following 318-residue polypeptide: Taste receptor type 2 member 7 (318 aa).

Residues 1 to 9 lie on the Extracellular side of the membrane; that stretch reads MTDKVQTTL. A helical membrane pass occupies residues 10–30; the sequence is LFLAVGEFSVGILGNAFIGLV. Topologically, residues 31–55 are cytoplasmic; sequence NCMDWIKKRKIASIDLILTSLAISR. A helical transmembrane segment spans residues 56–76; that stretch reads ICLLCVILLDCFILVLYPDVY. At 77-94 the chain is on the extracellular side; the sequence is ATGKEMRIIDFFWILTNH. The chain crosses the membrane as a helical span at residues 95-115; that stretch reads LSIWFATCLSIYYFFKIANFF. Residues 116-128 lie on the Cytoplasmic side of the membrane; sequence HPLFLWMKWRIDR. The helical transmembrane segment at 129 to 149 threads the bilayer; sequence VISWILLGCMVLSVFISLPAT. The Extracellular segment spans residues 150–187; it reads ENLNADFRFCVKAKRKTNLTWSCRVNKTQHASIKLLLN. N-linked (GlcNAc...) asparagine glycans are attached at residues Asn-167 and Asn-175. The helical transmembrane segment at 188 to 208 threads the bilayer; that stretch reads LATLLPFCVCLMSFFLLILSL. At 209–235 the chain is on the cytoplasmic side; the sequence is RRHIRRMQLSATGCRDPSTEAHVRALK. The chain crosses the membrane as a helical span at residues 236–256; sequence AVISFLLLFIAYYLSFLIATS. Over 257–266 the chain is Extracellular; the sequence is SYFMPETELA. A helical membrane pass occupies residues 267-287; that stretch reads VIFGESIALIYPSSHSFILIL. At 288 to 318 the chain is on the cytoplasmic side; the sequence is GNNKLRHASLKVIWKVMSILKGRKFQQHKQI.

It belongs to the G-protein coupled receptor T2R family.

Its subcellular location is the membrane. In terms of biological role, gustducin-coupled receptor implicated in the perception of bitter compounds in the oral cavity and the gastrointestinal tract. Signals through PLCB2 and the calcium-regulated cation channel TRPM5. This chain is Taste receptor type 2 member 7 (TAS2R7), found in Pongo pygmaeus (Bornean orangutan).